We begin with the raw amino-acid sequence, 467 residues long: ATP synthase subunit beta, sodium ion specific (467 aa).

151 to 158 (GGAGVGKT) contributes to the ATP binding site.

Belongs to the ATPase alpha/beta chains family. In terms of assembly, F-type ATPases have 2 components, CF(1) - the catalytic core - and CF(0) - the membrane proton channel. CF(1) has five subunits: alpha(3), beta(3), gamma(1), delta(1), epsilon(1). CF(0) has three main subunits: a, b and c.

The protein localises to the cell membrane. It catalyses the reaction 4 Na(+)(in) + ATP + H2O = 4 Na(+)(out) + ADP + phosphate + H(+). Functionally, produces ATP from ADP in the presence of a sodium ion gradient across the membrane. The beta chain is the catalytic subunit. The protein is ATP synthase subunit beta, sodium ion specific of Propionigenium modestum.